The sequence spans 391 residues: Pyruvate dehydrogenase E1 component subunit alpha type II, mitochondrial (391 aa).

A mitochondrion-targeting transit peptide spans 1 to 17 (SNIFKGPTVGSSVVAMS). Pyruvate contacts are provided by His-83, Tyr-109, Arg-110, Gly-148, Gly-156, Val-158, Asp-187, Gly-188, Ala-189, Asn-216, and Tyr-218. Thiamine diphosphate-binding residues include Tyr-109 and Arg-110. Gly-156, Val-158, Asp-187, Gly-188, Ala-189, and Asn-216 together coordinate thiamine diphosphate. Asp-187 serves as a coordination point for Mg(2+). The Mg(2+) site is built by Asn-216 and Tyr-218. Residue His-283 coordinates thiamine diphosphate. 2 positions are modified to phosphoserine: Ser-284 and Ser-291.

As to quaternary structure, heterotetramer of two PDHA2 and two PDHB subunits. The heterotetramer interacts with DLAT, and is part of the multimeric pyruvate dehydrogenase complex that contains multiple copies of pyruvate dehydrogenase (E1), dihydrolipoamide acetyltransferase (DLAT, E2) and lipoamide dehydrogenase (DLD, E3). It depends on thiamine diphosphate as a cofactor. Mg(2+) serves as cofactor.

The protein resides in the mitochondrion matrix. The enzyme catalyses N(6)-[(R)-lipoyl]-L-lysyl-[protein] + pyruvate + H(+) = N(6)-[(R)-S(8)-acetyldihydrolipoyl]-L-lysyl-[protein] + CO2. With respect to regulation, pyruvate dehydrogenase activity is inhibited by phosphorylation of PDHA2; it is reactivated by dephosphorylation. Functionally, the pyruvate dehydrogenase complex catalyzes the overall conversion of pyruvate to acetyl-CoA and CO(2), and thereby links the glycolytic pathway to the tricarboxylic cycle. In Ascaris suum (Pig roundworm), this protein is Pyruvate dehydrogenase E1 component subunit alpha type II, mitochondrial.